Here is a 631-residue protein sequence, read N- to C-terminus: Beta-galactosidase-1-like protein 3 (631 aa).

The active-site Proton donor is glutamate 203. Glutamate 277 functions as the Nucleophile in the catalytic mechanism.

It belongs to the glycosyl hydrolase 35 family.

The chain is Beta-galactosidase-1-like protein 3 (Glb1l3) from Rattus norvegicus (Rat).